The primary structure comprises 259 residues: Large ribosomal subunit protein uL4 (259 aa).

Residues 47-67 are disordered; that stretch reads WGTDPMAGKRTTAESFGSGRG.

Belongs to the universal ribosomal protein uL4 family. Part of the 50S ribosomal subunit.

Functionally, one of the primary rRNA binding proteins, this protein initially binds near the 5'-end of the 23S rRNA. It is important during the early stages of 50S assembly. It makes multiple contacts with different domains of the 23S rRNA in the assembled 50S subunit and ribosome. Its function is as follows. Forms part of the polypeptide exit tunnel. This chain is Large ribosomal subunit protein uL4, found in Methanosphaera stadtmanae (strain ATCC 43021 / DSM 3091 / JCM 11832 / MCB-3).